Consider the following 341-residue polypeptide: tRNA N6-adenosine threonylcarbamoyltransferase (341 aa).

The Fe cation site is built by His111 and His115. Substrate is bound by residues 134–138 (LVSGG), Asp167, Gly180, and Asn270. Asp298 contacts Fe cation.

The protein belongs to the KAE1 / TsaD family. Fe(2+) serves as cofactor.

It is found in the cytoplasm. The enzyme catalyses L-threonylcarbamoyladenylate + adenosine(37) in tRNA = N(6)-L-threonylcarbamoyladenosine(37) in tRNA + AMP + H(+). Its function is as follows. Required for the formation of a threonylcarbamoyl group on adenosine at position 37 (t(6)A37) in tRNAs that read codons beginning with adenine. Is involved in the transfer of the threonylcarbamoyl moiety of threonylcarbamoyl-AMP (TC-AMP) to the N6 group of A37, together with TsaE and TsaB. TsaD likely plays a direct catalytic role in this reaction. In Thiobacillus denitrificans (strain ATCC 25259 / T1), this protein is tRNA N6-adenosine threonylcarbamoyltransferase.